Consider the following 492-residue polypeptide: MKLKMNKACDIASISVLPPRRTGGSSGASASGSVAVAVASQPRSQPLSQSQQSFSQGASASLLHSQSQFSQVSLDDNLLTLLPSPTRDQRFGLHDDSSKRMSSLPASSASCAREESQLQLAKLPSNPVHRWNPSIADTRSGQVTNEDVERKFQHLASSVHKMGMVVDSVQSDVMQLNRAMKEASLDSGSIRQKIAVLESSLQQILKGQDDLKALFGSSTKHNPDQTSVLNSLGSKLNEISSTLATLQTQMQARQLQGDQTTVLNSNASKSNEISSTLATLQTQMQADIRQLRCDVFRVFTKEMEGVVRAIRSVNSRPAAMQMMADQSYQVPVSNGWTQINQTPVAAGRSPMNRAPVAAGRSRMNQLPETKVLSAHLVYPAKVTDLKPKVEQGKVKAAPQKPFASSYYRVAPKQEEVAIRKVNIQVPAKKAPVSIIIESDDDSEGRASCVILKTETGSKEWKVTKQGTEEGLEILRRARKRRRREMQSIVLAS.

The stretch at 166–186 forms a coiled coil; it reads VDSVQSDVMQLNRAMKEASLD. Residues 479 to 483 carry the Nuclear localization signal motif; it reads KRRRR.

As to quaternary structure, interacts with CRC1. In terms of tissue distribution, expressed in reproductive organs, but not in vegetative organs.

Its subcellular location is the nucleus. Involved in spore formation. Plays an essential role in the establishment of homologous chromosome pairing in early meiosis. This chain is Protein PAIR1 (PAIR1), found in Oryza sativa subsp. japonica (Rice).